The primary structure comprises 260 residues: Flap endonuclease Xni (260 aa).

Residue Asp105 participates in Mg(2+) binding. One can recognise a 5'-3' exonuclease domain in the interval 164–259 (NQFLDLMALA…VNGPANTQQA (96 aa)). K(+) contacts are provided by Leu172, Ala173, Pro181, Ile183, and Ile186. The interval 185-190 (GIGPKS) is interaction with DNA.

The protein belongs to the Xni family. Mg(2+) serves as cofactor. K(+) is required as a cofactor.

Its function is as follows. Has flap endonuclease activity. During DNA replication, flap endonucleases cleave the 5'-overhanging flap structure that is generated by displacement synthesis when DNA polymerase encounters the 5'-end of a downstream Okazaki fragment. The polypeptide is Flap endonuclease Xni (Shewanella sp. (strain MR-4)).